Consider the following 31-residue polypeptide: MEALVYTFLLVGTLGIIFFSIFFRDPPRMIK.

Residues 3-23 (ALVYTFLLVGTLGIIFFSIFF) traverse the membrane as a helical segment.

This sequence belongs to the PsbT family. As to quaternary structure, PSII is composed of 1 copy each of membrane proteins PsbA, PsbB, PsbC, PsbD, PsbE, PsbF, PsbH, PsbI, PsbJ, PsbK, PsbL, PsbM, PsbT, PsbY, PsbZ, Psb30/Ycf12, at least 3 peripheral proteins of the oxygen-evolving complex and a large number of cofactors. It forms dimeric complexes.

It is found in the plastid. The protein resides in the chloroplast thylakoid membrane. Found at the monomer-monomer interface of the photosystem II (PS II) dimer, plays a role in assembly and dimerization of PSII. PSII is a light-driven water plastoquinone oxidoreductase, using light energy to abstract electrons from H(2)O, generating a proton gradient subsequently used for ATP formation. The sequence is that of Photosystem II reaction center protein T from Chlamydomonas reinhardtii (Chlamydomonas smithii).